The sequence spans 290 residues: NAD kinase (290 aa).

Aspartate 72 (proton acceptor) is an active-site residue. NAD(+)-binding positions include 72–73, lysine 77, 145–146, aspartate 175, 186–191, and alanine 210; these read DG, NE, and TAYSLS.

It belongs to the NAD kinase family. Requires a divalent metal cation as cofactor.

The protein localises to the cytoplasm. It carries out the reaction NAD(+) + ATP = ADP + NADP(+) + H(+). Its function is as follows. Involved in the regulation of the intracellular balance of NAD and NADP, and is a key enzyme in the biosynthesis of NADP. Catalyzes specifically the phosphorylation on 2'-hydroxyl of the adenosine moiety of NAD to yield NADP. The protein is NAD kinase of Bacteroides fragilis (strain ATCC 25285 / DSM 2151 / CCUG 4856 / JCM 11019 / LMG 10263 / NCTC 9343 / Onslow / VPI 2553 / EN-2).